The primary structure comprises 139 residues: Trafficking protein particle complex subunit 2-like protein (139 aa).

The protein belongs to the TRAPP small subunits family. Sedlin subfamily. In terms of assembly, component of the multisubunit TRAPP (transport protein particle) complex, which includes at least TRAPPC2, TRAPPC2L, TRAPPC3, TRAPPC3L, TRAPPC4, TRAPPC5, TRAPPC8, TRAPPC9, TRAPPC10, TRAPPC11 and TRAPPC12. Interacts with the heterodimer TRAPPC3-TRAPPC6A.

The protein resides in the cytoplasm. It localises to the perinuclear region. Its subcellular location is the endoplasmic reticulum. The protein localises to the golgi apparatus. May play a role in vesicular transport from endoplasmic reticulum to Golgi. In Rattus norvegicus (Rat), this protein is Trafficking protein particle complex subunit 2-like protein (Trappc2l).